The chain runs to 421 residues: Synaptotagmin-1 (421 aa).

Positions 1–40 are disordered; the sequence is MVSESHHEALAAPPATTVAAAPPSNVTEPASPGGGGGKED. Residues 1 to 60 lie on the Vesicular side of the membrane; it reads MVSESHHEALAAPPATTVAAAPPSNVTEPASPGGGGGKEDAFSKLKEKFMNELNKIPLPP. Over residues 10-23 the composition is skewed to low complexity; sequence LAAPPATTVAAAPP. N-linked (GlcNAc...) asparagine glycosylation occurs at Asn-25. Residues 61–81 form a helical membrane-spanning segment; it reads WALIAIAIVAVLLILTCCFCL. Residues Cys-77, Cys-78, Cys-80, Cys-82, and Cys-85 are each lipidated (S-palmitoyl cysteine). Topologically, residues 82–421 are cytoplasmic; the sequence is CKKCLFKKKN…EVDAMLAVKK (340 aa). The segment at 94–139 is disordered; that stretch reads KGKEKGGKNAINMKDVKDLGKTMKDQDDDAETGLTDGEEKEEPKEV. Positions 107–118 are enriched in basic and acidic residues; it reads KDVKDLGKTMKD. Residues 119–133 are compositionally biased toward acidic residues; the sequence is QDDDAETGLTDGEEK. Positions 135 to 381 are phospholipid binding; sequence EPKEVEKLGK…AIGKVFVGYN (247 aa). 2 C2 domains span residues 141 to 260 and 272 to 405; these read KLGK…EEWR and KLGD…AQWH. Residues Leu-171, Asp-172, Asp-178, Asp-230, Phe-231, Asp-232, Ser-235, Lys-236, Asp-238, Asp-303, Asp-309, Asp-363, Asp-365, and Asp-371 each contribute to the Ca(2+) site.

It belongs to the synaptotagmin family. As to quaternary structure, homotetramer. The cofactor is Ca(2+).

Its subcellular location is the cytoplasmic vesicle. It localises to the secretory vesicle membrane. The protein localises to the secretory vesicle. The protein resides in the synaptic vesicle membrane. It is found in the chromaffin granule membrane. Its subcellular location is the cytoplasm. In terms of biological role, calcium sensor that participates in triggering neurotransmitter release at the synapse. May have a regulatory role in the membrane interactions during trafficking of synaptic vesicles at the active zone of the synapse. It binds acidic phospholipids with a specificity that requires the presence of both an acidic head group and a diacyl backbone. May play a role in dendrite formation by melanocytes. May play a role in regulating the secretion of hormones relevant to the reproduction and egg-laying of female geese. This chain is Synaptotagmin-1, found in Anser cygnoides (Swan goose).